Here is a 305-residue protein sequence, read N- to C-terminus: Ribosomal RNA small subunit methyltransferase H (305 aa).

S-adenosyl-L-methionine contacts are provided by residues glycine 33–tyrosine 35, aspartate 51, phenylalanine 78, aspartate 96, and glutamine 103.

Belongs to the methyltransferase superfamily. RsmH family.

The protein resides in the cytoplasm. It catalyses the reaction cytidine(1402) in 16S rRNA + S-adenosyl-L-methionine = N(4)-methylcytidine(1402) in 16S rRNA + S-adenosyl-L-homocysteine + H(+). Functionally, specifically methylates the N4 position of cytidine in position 1402 (C1402) of 16S rRNA. This chain is Ribosomal RNA small subunit methyltransferase H, found in Rickettsia bellii (strain RML369-C).